We begin with the raw amino-acid sequence, 757 residues long: MDVNPTLLFLKVPAQNAISTTFPYTGDPPYSHGTGTGYTMDTVNRTHQYSEKGKWTTNTETGAPQLNPIDGPLPEDNEPSGYAQTDCVLEAMAFLEESHPGIFENSCLETMEVIQQTRVDKLTQGRQTYDWTLNRNQPAATALANTIEVFRSNGMTANESGRLIDFLKDVIESMDKEEMEITTHFQRKRRVRDNMTKKMVTQRTIGKKKQRLNKRSYLIRALTLNTMTKDAERGKLKRRAIATPGMQIRGFVYFVETLARSICEKLEQSGLPVGGNEKKAKLANVVRKMMTNSQDTELSFTITGDNTKWNENQNPRMFLAMITYITRNQPEWFRNVLSIAPIMFSNKMARLGKGYMFESKSMKLRTQIPAEMLASIDLKYFNESTRKKIEKIRPLLIDGTVSLSPGMMMGMFNMLSTVLGVSILNLGQKKYTKTTYWWDGLQSSDDFALIVNAPNHEGIQAGVDRFYRTCKLVGINMSKKKSYINRTGTFEFTSFFYRYGFVANFSMELPSFGVSGINESADMSIGVTVIKNNMINNDLGPATAQMALQLFIKDYRYTYRCHRGDTQIQTRRSFELKKLWEQTRSKAGLLVSDGGPNLYNIRNLHIPEVCLKWELMDEDYQGRLCNPLNPFVSHKEIESVNNAVVMPAHGPAKSMEYDAVATTHSWIPKRNRSILNTSQRGILEDEQMYQKCCNLFEKFFPSSSYRRPVGISSMVEAMVSRARIDARIDFESGRIKKEEFAEIMKICSTIEELRRQK.

A disordered region spans residues 50-82 (SEKGKWTTNTETGAPQLNPIDGPLPEDNEPSGY). Residues 55–64 (WTTNTETGAP) show a composition bias toward polar residues. 2 consecutive short sequence motifs (nuclear localization signal) follow at residues 187 to 195 (RKRRVRDNM) and 203 to 216 (RTIGKKKQRLNKRS). The promoter-binding site stretch occupies residues 249 to 256 (RGFVYFVE). The 198-residue stretch at 286-483 (VRKMMTNSQD…GINMSKKKSY (198 aa)) folds into the RdRp catalytic domain.

It belongs to the influenza viruses polymerase PB1 family. As to quaternary structure, influenza RNA polymerase is composed of three subunits: PB1, PB2 and PA. Interacts (via N-terminus) with PA (via C-terminus). Interacts (via C-terminus) with PB2 (via N-terminus); this interaction is essential for transcription initiation. Post-translationally, phosphorylated by host PRKCA.

The protein localises to the host nucleus. It localises to the host cytoplasm. The enzyme catalyses RNA(n) + a ribonucleoside 5'-triphosphate = RNA(n+1) + diphosphate. In terms of biological role, RNA-dependent RNA polymerase which is responsible for replication and transcription of virus RNA segments. The transcription of viral mRNAs occurs by a unique mechanism called cap-snatching. 5' methylated caps of cellular mRNAs are cleaved after 10-13 nucleotides by PA. In turn, these short capped RNAs are used as primers by PB1 for transcription of viral mRNAs. During virus replication, PB1 initiates RNA synthesis and copy vRNA into complementary RNA (cRNA) which in turn serves as a template for the production of more vRNAs. This Influenza A virus (strain A/Singapore/1/1957 H2N2) protein is RNA-directed RNA polymerase catalytic subunit.